Consider the following 118-residue polypeptide: Large ribosomal subunit protein bL20 (118 aa).

This sequence belongs to the bacterial ribosomal protein bL20 family.

Functionally, binds directly to 23S ribosomal RNA and is necessary for the in vitro assembly process of the 50S ribosomal subunit. It is not involved in the protein synthesizing functions of that subunit. This chain is Large ribosomal subunit protein bL20, found in Azotobacter vinelandii.